A 474-amino-acid chain; its full sequence is Glutathione synthetase (474 aa).

The residue at position 2 (A2) is an N-acetylalanine. R125 is a substrate binding site. Position 144 (E144) interacts with ATP. Residues E144 and N146 each coordinate Mg(2+). Substrate-binding positions include 148–151 (ISAS), 214–216 (ERN), Q220, and 267–270 (RDGY). ATP is bound by residues K305, 364–373 (KPQREGGGNN), Y375, and 398–401 (MEKI). A Mg(2+)-binding site is contributed by E368. A Phosphoserine modification is found at S415. Residue E425 coordinates ATP. A substrate-binding site is contributed by R450. Positions 452 and 458 each coordinate ATP. Position 461 to 462 (461 to 462 (VA)) interacts with substrate.

This sequence belongs to the eukaryotic GSH synthase family. In terms of assembly, homodimer. The cofactor is Mg(2+).

It carries out the reaction gamma-L-glutamyl-L-cysteine + glycine + ATP = glutathione + ADP + phosphate + H(+). It catalyses the reaction gamma-L-glutamyl-(2S)-2-aminobutanoate + glycine + ATP = ophthalmate + ADP + phosphate + H(+). The protein operates within sulfur metabolism; glutathione biosynthesis; glutathione from L-cysteine and L-glutamate: step 2/2. Catalyzes the production of glutathione from gamma-glutamylcysteine and glycine in an ATP-dependent manner. Glutathione (gamma-glutamylcysteinylglycine, GSH) is the most abundant intracellular thiol in living aerobic cells and is required for numerous processes including the protection of cells against oxidative damage, amino acid transport, the detoxification of foreign compounds, the maintenance of protein sulfhydryl groups in a reduced state and acts as a cofactor for a number of enzymes. Participates in ophthalmate biosynthesis in hepatocytes. The chain is Glutathione synthetase from Rattus norvegicus (Rat).